A 1574-amino-acid polypeptide reads, in one-letter code: Disco-interacting protein 2 homolog B (1574 aa).

Residues serine 9, serine 50, and serine 53 each carry the phosphoserine modification. A DMAP1-binding domain is found at 12–130 (AVAALPPEVR…PMPTKRRSTF (119 aa)). Positions 31 to 166 (LSEGDITQKG…AALSAALQQS (136 aa)) are disordered. Positions 52–62 (YSPQTQETDSI) are enriched in polar residues. Residues 69 to 82 (QTPAPTAAQTSAPS) are compositionally biased toward low complexity. Residue threonine 70 is modified to Phosphothreonine. Basic and acidic residues predominate over residues 91-103 (GARDERYRSDIHT). At serine 99 the chain carries Phosphoserine. Threonine 139 is subject to Phosphothreonine. A phosphoserine mark is found at serine 145, serine 147, and serine 152. Low complexity predominate over residues 154–166 (RRQAALSAALQQS). 3 positions are modified to phosphoserine: serine 177, serine 192, and serine 202. A disordered region spans residues 178-200 (IQGSSTSSSASSTLSHGEVKGTS). The span at 181–192 (SSTSSSASSTLS) shows a compositional bias: low complexity. Residues 217 to 244 (APPDVTATTSSSSSSLRPANIDLPPSGI) are disordered. A Phosphoserine modification is found at serine 256.

This sequence belongs to the DIP2 family. Interacts with alpha-tubulin. Highly expressed in brain and spinal cord (at protein level). In brain, expression is detected in the main olfactory bulb, cortex, lateral ventricle, cornu ammonis 1, cornu ammonis 3, dentate gyrus, striatum, cerebellar cortex and medial habenula. Expressed primarily in neurons including excitatory pyramidal neurons and inhibitory interneurons.

The protein localises to the cell projection. The protein resides in the dendrite. It localises to the axon. It is found in the perikaryon. In terms of biological role, negatively regulates axonal outgrowth and is essential for normal synaptic transmission. Not required for regulation of axon polarity. Promotes acetylation of alpha-tubulin. This Mus musculus (Mouse) protein is Disco-interacting protein 2 homolog B (Dip2b).